Reading from the N-terminus, the 193-residue chain is dCTP deaminase (193 aa).

Residues 110–115 (RSSLAR), Asp-128, 136–138 (VLE), Tyr-171, Lys-178, and Gln-182 each bind dCTP. Catalysis depends on Glu-138, which acts as the Proton donor/acceptor. The interval 169 to 193 (RPYNRRQDAKYRDQQGAVASRIDKD) is disordered.

It belongs to the dCTP deaminase family. Homotrimer.

It carries out the reaction dCTP + H2O + H(+) = dUTP + NH4(+). It functions in the pathway pyrimidine metabolism; dUMP biosynthesis; dUMP from dCTP (dUTP route): step 1/2. In terms of biological role, catalyzes the deamination of dCTP to dUTP. In Salmonella arizonae (strain ATCC BAA-731 / CDC346-86 / RSK2980), this protein is dCTP deaminase.